A 433-amino-acid chain; its full sequence is Serine--tRNA ligase (433 aa).

L-serine is bound at residue 235-237; it reads TSE. Residue 266–268 participates in ATP binding; it reads RSE. Glu289 is a binding site for L-serine. Residue 353 to 356 participates in ATP binding; it reads EISS. Ser388 contacts L-serine.

The protein belongs to the class-II aminoacyl-tRNA synthetase family. Type-1 seryl-tRNA synthetase subfamily. As to quaternary structure, homodimer. The tRNA molecule binds across the dimer.

The protein resides in the cytoplasm. The enzyme catalyses tRNA(Ser) + L-serine + ATP = L-seryl-tRNA(Ser) + AMP + diphosphate + H(+). The catalysed reaction is tRNA(Sec) + L-serine + ATP = L-seryl-tRNA(Sec) + AMP + diphosphate + H(+). The protein operates within aminoacyl-tRNA biosynthesis; selenocysteinyl-tRNA(Sec) biosynthesis; L-seryl-tRNA(Sec) from L-serine and tRNA(Sec): step 1/1. Functionally, catalyzes the attachment of serine to tRNA(Ser). Is also able to aminoacylate tRNA(Sec) with serine, to form the misacylated tRNA L-seryl-tRNA(Sec), which will be further converted into selenocysteinyl-tRNA(Sec). This Burkholderia pseudomallei (strain 668) protein is Serine--tRNA ligase.